The following is a 461-amino-acid chain: Probable lipid II flippase MurJ (461 aa).

12 consecutive transmembrane segments (helical) span residues 5-25, 51-71, 96-116, 123-143, 156-176, 229-249, 258-278, 293-313, 337-357, 372-392, 402-422, and 429-449; these read ILGA…PNLF, FASL…LLVA, IVAI…LGAL, FFAS…ALLI, LSYG…YPLV, IASF…VSYL, LPLA…IAIA, KAWF…IMLS, VFSL…FSLW, LISL…LGVL, GLFL…LGII, and LVIL…KSWV.

Belongs to the MurJ/MviN family.

It localises to the cell inner membrane. Its pathway is cell wall biogenesis; peptidoglycan biosynthesis. Its function is as follows. Involved in peptidoglycan biosynthesis. Transports lipid-linked peptidoglycan precursors from the inner to the outer leaflet of the cytoplasmic membrane. The sequence is that of Probable lipid II flippase MurJ from Helicobacter pylori (strain ATCC 700392 / 26695) (Campylobacter pylori).